The primary structure comprises 159 residues: NADH-quinone oxidoreductase subunit I (159 aa).

4Fe-4S ferredoxin-type domains are found at residues 51–80 (RRYE…IEAD) and 90–119 (TRYD…EGPN). [4Fe-4S] cluster contacts are provided by Cys60, Cys63, Cys66, Cys70, Cys99, Cys102, Cys105, and Cys109.

This sequence belongs to the complex I 23 kDa subunit family. In terms of assembly, NDH-1 is composed of 14 different subunits. Subunits NuoA, H, J, K, L, M, N constitute the membrane sector of the complex. The cofactor is [4Fe-4S] cluster.

It localises to the cell inner membrane. The catalysed reaction is a quinone + NADH + 5 H(+)(in) = a quinol + NAD(+) + 4 H(+)(out). Its function is as follows. NDH-1 shuttles electrons from NADH, via FMN and iron-sulfur (Fe-S) centers, to quinones in the respiratory chain. The immediate electron acceptor for the enzyme in this species is believed to be ubiquinone. Couples the redox reaction to proton translocation (for every two electrons transferred, four hydrogen ions are translocated across the cytoplasmic membrane), and thus conserves the redox energy in a proton gradient. The polypeptide is NADH-quinone oxidoreductase subunit I (Rickettsia rickettsii (strain Sheila Smith)).